The chain runs to 904 residues: MNEYRSSLVFATPDLPLRDDVRRLGALVGDLLAEQVSAEFLDEIERVRTTAISRRESDAPPSTLSEQLTGRQPRDAEALVRAFSTYFQVVNIAERVHRIRRRREYQRSGTDTPQPDGLHDALRRLKAQGVTLDELSQWLPRIDVEPVFTAHPTEAVRRALLEKEQLMVASLVDNLDGMRTPNERASDAARFRMALTASWQTADSSPVRPTVDDEREHVGFYLTQVLYRVIPVMYETLEHAIEETYGSVPALPRLLRFGTWVGGDMDGNPNVDAKTIAGTLDAQRRAVLDRYQKELWQLASLLSQSTTLVQVSAELTAQLERYRALLPDAAARSRPRHGDMPYRLLNDLMRARLQATLDDAEGAYSAPSELEHDLQLILDSLQANKGLHAGWFAVRRLLWRVRSFGFHLARLDVRQESSVHARAVADALGQTDWDAQDATQRAAVLGPYAAGQEPLPRVDDEGNARLDAVFAALADARTRHGADALGSYIISMAHNRADVLTVLALARRGGLVDDAGAVPLDIVPLFETVDDLRGGTGTVQDLLADPVYRQHLAARGDTQMVMLGYSDSGKDGGIAASRWGLQRAQVELLEAAAELGVRLTFFHGRGGSIARGGGKTSRALDAAPRGSVDGRLRVTEQGEVIHRKYGIRALALRSLEQMTGAVLLSSLRPRAPEPREAHWRPVMDLVAERSTVAYRAFVGAPEFMQYFRLATPIDVIERMTLGSRPSRRLGQDAALSNLRAIPWVFAWSQARAVIPGWYGVGSGLQAAVDAGHEDTLREMAQDWPFFRTFLDDIAMVLSKGDLNIAELFSRLSGDLHTRFFPLIRDELALTKAWVKALLQQQSLLQHDPRLALSIRLRNPYIDPISVLQVDLLQRWRATDGEDEALLRALVACVNGVSQGVQNTG.

A disordered region spans residues 52 to 71; sequence ISRRESDAPPSTLSEQLTGR. The segment covering 60–70 has biased composition (polar residues); it reads PPSTLSEQLTG. Active-site residues include His-151 and Lys-570.

This sequence belongs to the PEPCase type 1 family. Mg(2+) is required as a cofactor.

It catalyses the reaction oxaloacetate + phosphate = phosphoenolpyruvate + hydrogencarbonate. Its function is as follows. Forms oxaloacetate, a four-carbon dicarboxylic acid source for the tricarboxylic acid cycle. This Xanthomonas euvesicatoria pv. vesicatoria (strain 85-10) (Xanthomonas campestris pv. vesicatoria) protein is Phosphoenolpyruvate carboxylase.